The primary structure comprises 148 residues: Large ribosomal subunit protein bL9 (148 aa).

Belongs to the bacterial ribosomal protein bL9 family.

Binds to the 23S rRNA. In Syntrophotalea carbinolica (strain DSM 2380 / NBRC 103641 / GraBd1) (Pelobacter carbinolicus), this protein is Large ribosomal subunit protein bL9.